We begin with the raw amino-acid sequence, 607 residues long: Pyruvate decarboxylase 1 (607 aa).

Substrate contacts are provided by D69 and H156. Residues 434–516 (DSWFNCQKLK…FLINNGGYTI (83 aa)) are thiamine pyrophosphate binding. Positions 484, 511, and 513 each coordinate Mg(2+). E517 is a binding site for substrate.

This sequence belongs to the TPP enzyme family. In terms of assembly, homotetramer. A metal cation is required as a cofactor. It depends on thiamine diphosphate as a cofactor. Highly expressed in seeds, and at lower levels in roots and siliques.

It catalyses the reaction a 2-oxocarboxylate + H(+) = an aldehyde + CO2. Its function is as follows. May play a role in ethanolic fermentation during anoxia. In Arabidopsis thaliana (Mouse-ear cress), this protein is Pyruvate decarboxylase 1 (PDC1).